The primary structure comprises 378 residues: Mannitol-1-phosphate 5-dehydrogenase (378 aa).

4-15 (SVHFGAGNIGRG) is a binding site for NAD(+).

This sequence belongs to the mannitol dehydrogenase family.

It carries out the reaction D-mannitol 1-phosphate + NAD(+) = beta-D-fructose 6-phosphate + NADH + H(+). The chain is Mannitol-1-phosphate 5-dehydrogenase from Streptococcus pneumoniae (strain JJA).